The primary structure comprises 1357 residues: DNA-directed RNA polymerase subunit beta (1357 aa).

This sequence belongs to the RNA polymerase beta chain family. In terms of assembly, the RNAP catalytic core consists of 2 alpha, 1 beta, 1 beta' and 1 omega subunit. When a sigma factor is associated with the core the holoenzyme is formed, which can initiate transcription.

It catalyses the reaction RNA(n) + a ribonucleoside 5'-triphosphate = RNA(n+1) + diphosphate. In terms of biological role, DNA-dependent RNA polymerase catalyzes the transcription of DNA into RNA using the four ribonucleoside triphosphates as substrates. This chain is DNA-directed RNA polymerase subunit beta, found in Neorickettsia sennetsu (Ehrlichia sennetsu).